The primary structure comprises 57 residues: UPF0391 membrane protein HNE_2348 (57 aa).

2 helical membrane passes run 4-24 (WALTFFILAIIAALLGFGGIA) and 27-47 (AASIAKILFFVFLALLVITFV).

Belongs to the UPF0391 family.

The protein localises to the cell membrane. This chain is UPF0391 membrane protein HNE_2348, found in Hyphomonas neptunium (strain ATCC 15444).